Here is a 312-residue protein sequence, read N- to C-terminus: Ribosomal RNA small subunit methyltransferase H (312 aa).

S-adenosyl-L-methionine-binding positions include A34–H36, D54, F81, D102, and Q109.

Belongs to the methyltransferase superfamily. RsmH family.

It is found in the cytoplasm. It catalyses the reaction cytidine(1402) in 16S rRNA + S-adenosyl-L-methionine = N(4)-methylcytidine(1402) in 16S rRNA + S-adenosyl-L-homocysteine + H(+). Functionally, specifically methylates the N4 position of cytidine in position 1402 (C1402) of 16S rRNA. The polypeptide is Ribosomal RNA small subunit methyltransferase H (Geotalea daltonii (strain DSM 22248 / JCM 15807 / FRC-32) (Geobacter daltonii)).